We begin with the raw amino-acid sequence, 579 residues long: XK-related protein 7 (579 aa).

Residues 1 to 18 (MAAKSDGAAASASPDPEG) show a composition bias toward low complexity. The interval 1–40 (MAAKSDGAAASASPDPEGAAGGARGSAGGRGEAAAAAGPP) is disordered. Positions 19–31 (AAGGARGSAGGRG) are enriched in gly residues. The next 2 helical transmembrane spans lie at 59-79 (WVLCALLVFFSDGATDLWLAA) and 89-109 (YFSLTLLFVLLPSLVVQLLSF). Residues 146–165 (GAFRTKEGSPEPGPQPAPSS) form a disordered region. A run of 5 helical transmembrane segments spans residues 260-280 (LLPALSTSASLVSLAWTLASY), 314-334 (GLAFALFASVYKLYFGIFIVA), 355-375 (WEEIIYNMVVGIIYIFCWFNV), 384-404 (MTLYHCIVLLENAALTGFWYS), and 415-435 (LIMVCVVASSFALGIFFMCVY). Positions 466-510 (ADAITSPPRSLPRTTGAERDGASAGERAGTPTPPVFQVRPGLPPT) are disordered.

Belongs to the XK family.

The protein resides in the cell membrane. In Homo sapiens (Human), this protein is XK-related protein 7.